The primary structure comprises 214 residues: Large ribosomal subunit protein uL3 (214 aa).

Residues 134–153 (ATHGNSLSHRAPGSIGQNQT) form a disordered region. Glutamine 152 carries the N5-methylglutamine modification.

It belongs to the universal ribosomal protein uL3 family. In terms of assembly, part of the 50S ribosomal subunit. Forms a cluster with proteins L14 and L19. In terms of processing, methylated by PrmB.

In terms of biological role, one of the primary rRNA binding proteins, it binds directly near the 3'-end of the 23S rRNA, where it nucleates assembly of the 50S subunit. This is Large ribosomal subunit protein uL3 from Buchnera aphidicola subsp. Baizongia pistaciae (strain Bp).